The sequence spans 496 residues: RNA-binding motif protein, Y chromosome, family 1 member E (496 aa).

One can recognise an RRM domain in the interval 8-85 (GKLFIGGLNR…KAIKVEQAKK (78 aa)). Disordered regions lie at residues 67–348 (DMNG…PHRD) and 453–496 (DQRN…SSRY). Composition is skewed to low complexity over residues 97–114 (PASSRNRSPSGSLRSARG) and 149–159 (PVKRGPSSRSG). Over residues 175–184 (NSWMGSQGPM) the composition is skewed to polar residues. 6 stretches are compositionally biased toward basic and acidic residues: residues 204–214 (RNDRMSTRHDG), 242–253 (DNGHSNRDEHSS), 276–289 (AYRDYGHSRRDESY), 313–326 (GYRDYGHSRRHESY), 335–348 (SSRETRDYAPPHRD), and 484–496 (GESRSEKGDSSRY).

Interacts with splicing factor proteins SFRS3/SRP20, TRA2B/SFRS10, KHDRBS1/SAM68 and KHDRBS3. Testis-specific.

It localises to the nucleus. Its function is as follows. RNA-binding protein which may be involved in spermatogenesis. Required for sperm development, possibly by participating in pre-mRNA splicing in the testis. The protein is RNA-binding motif protein, Y chromosome, family 1 member E (RBMY1E) of Homo sapiens (Human).